An 88-amino-acid polypeptide reads, in one-letter code: U13-theraphotoxin-Cg1a (88 aa).

The N-terminal stretch at 1 to 21 is a signal peptide; it reads MKVSVLITLAVLGVMFVWASA. The propeptide occupies 22-52; sequence AELEQSGSDQKDSDSPAWLKSMERIFQSEER. Intrachain disulfides connect Cys54-Cys68, Cys61-Cys73, and Cys67-Cys80.

Belongs to the neurotoxin 10 (Hwtx-1) family. 41 (Jztx-36) subfamily. As to expression, expressed by the venom gland.

The protein localises to the secreted. In terms of biological role, probable ion channel inhibitor. This Chilobrachys guangxiensis (Chinese earth tiger tarantula) protein is U13-theraphotoxin-Cg1a.